The following is a 126-amino-acid chain: Glycine--tRNA ligase beta subunit (126 aa).

Belongs to the class-II aminoacyl-tRNA synthetase family. Tetramer of two alpha and two beta subunits.

It is found in the cytoplasm. It carries out the reaction tRNA(Gly) + glycine + ATP = glycyl-tRNA(Gly) + AMP + diphosphate. In Neisseria gonorrhoeae, this protein is Glycine--tRNA ligase beta subunit (glyS).